The primary structure comprises 631 residues: Chaperone protein HtpG (631 aa).

The interval 1 to 338 (MILKEQETLG…CNDLPLNISR (338 aa)) is a; substrate-binding. Positions 339–554 (EMLQHNRITQ…SNNMTTHMAK (216 aa)) are b. The c stretch occupies residues 555–631 (LIVASGQNKP…KLLNHDTIVN (77 aa)).

The protein belongs to the heat shock protein 90 family. In terms of assembly, homodimer.

It is found in the cytoplasm. Functionally, molecular chaperone. Has ATPase activity. In Baumannia cicadellinicola subsp. Homalodisca coagulata, this protein is Chaperone protein HtpG.